Reading from the N-terminus, the 344-residue chain is MIEINRVNKVFYQGERAINALSDINLTIEQGTIFGVIGSSGAGKSTLIRCVNLLERPTSGHIIVDGVDLTQLSNKELSLARRKIGMIFQHFNLLSSRTVFENVALPLELAGASNNAIKEKVDGLLKLVGLSDKNDTYPCNLSGGQKQRVAIARALASDPKVLLCDEATSALDPATTQSILDLLREINRELNLTILLITHEMDVVKGICSQVAIIGDGELVEKGPVGDIFAHPKTELARKFIRSTLDLSIPTDFQARMTPEKVTGSYPLIRLEFTGASVNAPLISQVAREFNIDISILSSDMDYIGGVKFGLMLAELFGTEQAAEQAIAFLRDHKVNVEVLGYVA.

The ABC transporter domain occupies 2–241; sequence IEINRVNKVF…PKTELARKFI (240 aa). 38 to 45 is a binding site for ATP; that stretch reads GSSGAGKS.

Belongs to the ABC transporter superfamily. Methionine importer (TC 3.A.1.24) family. As to quaternary structure, the complex is composed of two ATP-binding proteins (MetN), two transmembrane proteins (MetI) and a solute-binding protein (MetQ).

Its subcellular location is the cell inner membrane. It carries out the reaction L-methionine(out) + ATP + H2O = L-methionine(in) + ADP + phosphate + H(+). The enzyme catalyses D-methionine(out) + ATP + H2O = D-methionine(in) + ADP + phosphate + H(+). Part of the ABC transporter complex MetNIQ involved in methionine import. Responsible for energy coupling to the transport system. The sequence is that of Methionine import ATP-binding protein MetN from Photobacterium profundum (strain SS9).